The chain runs to 94 residues: Integration host factor subunit beta (94 aa).

Belongs to the bacterial histone-like protein family. As to quaternary structure, heterodimer of an alpha and a beta chain.

Its function is as follows. This protein is one of the two subunits of integration host factor, a specific DNA-binding protein that functions in genetic recombination as well as in transcriptional and translational control. The polypeptide is Integration host factor subunit beta (ihfB) (Haemophilus influenzae (strain ATCC 51907 / DSM 11121 / KW20 / Rd)).